A 457-amino-acid chain; its full sequence is Multidrug resistance protein MdtK (457 aa).

The Cytoplasmic segment spans residues 1-10 (MQKYISEARL). Residues 11–31 (LLALAIPVILAQIAQTAMGFV) form a helical membrane-spanning segment. Residues 32-52 (DTVMAGGYSATDMAAVAIGTS) lie on the Extracellular side of the membrane. The chain crosses the membrane as a helical span at residues 53 to 73 (IWLPAILFGHGLLLALTPVIA). At 74 to 92 (QLNGSGRRERIAHQVRQGF) the chain is on the cytoplasmic side. A helical membrane pass occupies residues 93 to 113 (WLAGFVSVLIMLVLWNAGYII). The Extracellular segment spans residues 114–126 (RSMENIDPALADK). A helical membrane pass occupies residues 127 to 147 (AVGYLRALLWGAPGYLFFQVA). The Cytoplasmic segment spans residues 148-159 (RNQCEGLAKTKP). A helical transmembrane segment spans residues 160 to 180 (GMVMGFIGLLVNIPVNYIFIY). Residues 181–188 (GHFGMPEL) lie on the Extracellular side of the membrane. Residues 189 to 209 (GGVGCGVATAAVYWVMFLAMV) form a helical membrane-spanning segment. The Cytoplasmic portion of the chain corresponds to 210–242 (SYIKRARSMRDIRNEKGTAKPDPAVMKRLIQLG). A helical transmembrane segment spans residues 243–263 (LPIALALFFEVTLFAVVALLV). Topologically, residues 264-275 (SPLGIVDVAGHQ) are extracellular. A helical membrane pass occupies residues 276 to 296 (IALNFSSLMFVLPMSLAAAVT). At 297 to 313 (IRVGYRLGQGSTLDAQT) the chain is on the cytoplasmic side. A helical transmembrane segment spans residues 314 to 334 (AARTGLMVGVCMATLTAIFTV). The Extracellular portion of the chain corresponds to 335–349 (SLREQIALLYNDNPE). Residues 350–370 (VVTLAAHLMLLAAVYQISDSI) form a helical membrane-spanning segment. Over 371-386 (QVIGSGILRGYKDTRS) the chain is Cytoplasmic. The chain crosses the membrane as a helical span at residues 387–407 (IFYITFTAYWVLGLPSGYILA). At 408–417 (LTDLVVEPMG) the chain is on the extracellular side. The helical transmembrane segment at 418-438 (PAGFWIGFIIGLTSAAIMMML) threads the bilayer. The Cytoplasmic segment spans residues 439-457 (RMRYLQRLPSAIILQRASR).

It belongs to the multi antimicrobial extrusion (MATE) (TC 2.A.66.1) family. MdtK subfamily.

It localises to the cell inner membrane. In terms of biological role, multidrug efflux pump that functions probably as a Na(+)/drug antiporter. The protein is Multidrug resistance protein MdtK (mdtK) of Escherichia coli O157:H7.